A 119-amino-acid chain; its full sequence is Large ribosomal subunit protein uL18 (119 aa).

It belongs to the universal ribosomal protein uL18 family. As to quaternary structure, part of the 50S ribosomal subunit; part of the 5S rRNA/L5/L18/L25 subcomplex. Contacts the 5S and 23S rRNAs.

This is one of the proteins that bind and probably mediate the attachment of the 5S RNA into the large ribosomal subunit, where it forms part of the central protuberance. This chain is Large ribosomal subunit protein uL18, found in Xanthomonas oryzae pv. oryzae (strain MAFF 311018).